The sequence spans 301 residues: Probable alpha-L-glutamate ligase (301 aa).

The 184-residue stretch at 104-287 (LQILARKGIG…VAGKIIEYLE (184 aa)) folds into the ATP-grasp domain. ATP-binding positions include Lys141, 178–179 (EY), Asp187, and 211–213 (RSN). Residues Asp248, Glu260, and Asn262 each coordinate Mg(2+). Positions 248, 260, and 262 each coordinate Mn(2+).

This sequence belongs to the RimK family. It depends on Mg(2+) as a cofactor. Mn(2+) serves as cofactor.

This Picosynechococcus sp. (strain ATCC 27264 / PCC 7002 / PR-6) (Agmenellum quadruplicatum) protein is Probable alpha-L-glutamate ligase.